The sequence spans 107 residues: MAESHRLYVKGKHLSYQRSKRVNNPNVSLIKIEGVATPQDAQFYLGKRIAYVYRASKEVRGSKIRVMWGKVTRTHGNSGVVRATFRNNLPAKTFGASVRIFLYPSNI.

An N-acetylalanine; partial modification is found at A2. K47 is covalently cross-linked (Glycyl lysine isopeptide (Lys-Gly) (interchain with G-Cter in ubiquitin)).

It belongs to the eukaryotic ribosomal protein eL33 family. As to quaternary structure, component of the large ribosomal subunit (LSU). Mature yeast ribosomes consist of a small (40S) and a large (60S) subunit. The 40S small subunit contains 1 molecule of ribosomal RNA (18S rRNA) and 33 different proteins (encoded by 57 genes). The large 60S subunit contains 3 rRNA molecules (25S, 5.8S and 5S rRNA) and 46 different proteins (encoded by 81 genes). In terms of processing, N-terminally acetylated by acetyltransferase NatA.

Its subcellular location is the cytoplasm. Its function is as follows. Component of the ribosome, a large ribonucleoprotein complex responsible for the synthesis of proteins in the cell. The small ribosomal subunit (SSU) binds messenger RNAs (mRNAs) and translates the encoded message by selecting cognate aminoacyl-transfer RNA (tRNA) molecules. The large subunit (LSU) contains the ribosomal catalytic site termed the peptidyl transferase center (PTC), which catalyzes the formation of peptide bonds, thereby polymerizing the amino acids delivered by tRNAs into a polypeptide chain. The nascent polypeptides leave the ribosome through a tunnel in the LSU and interact with protein factors that function in enzymatic processing, targeting, and the membrane insertion of nascent chains at the exit of the ribosomal tunnel. The chain is Large ribosomal subunit protein eL33A from Saccharomyces cerevisiae (strain ATCC 204508 / S288c) (Baker's yeast).